Consider the following 223-residue polypeptide: Putative HTLV-1-related endogenous sequence (223 aa).

Over residues 1–19 the composition is skewed to low complexity; that stretch reads MRCAHAPAPRTRYPTRAPS. The interval 1–184 is disordered; sequence MRCAHAPAPR…ARAHGEAGAG (184 aa). The segment covering 115 to 126 has biased composition (basic and acidic residues); the sequence is GDRRREGPDRSP. Residues 133–157 show a composition bias toward low complexity; the sequence is PAAAAQPDSSSAQAPGPSTLRPAAT.

The polypeptide is Putative HTLV-1-related endogenous sequence (HRES1) (Homo sapiens (Human)).